The primary structure comprises 173 residues: Avenin-like a5 (173 aa).

Positions 1–19 (MKTMLILALIALAATSVVA) are cleaved as a signal peptide.

The protein belongs to the prolamin family. In terms of processing, contains 7 disulfide bonds.

In terms of biological role, seed storage protein. Not integrated in the gluten polymer through disulfide bonds, unless incorporated by reduction and reoxidation during dough making. Increases dough strength and bread volume, but decreases dough stability when added into a base wheat flour. The chain is Avenin-like a5 from Triticum aestivum (Wheat).